The chain runs to 257 residues: UPF0246 protein Shewmr4_2963 (257 aa).

This sequence belongs to the UPF0246 family.

This Shewanella sp. (strain MR-4) protein is UPF0246 protein Shewmr4_2963.